The sequence spans 427 residues: Queuine tRNA-ribosyltransferase catalytic subunit (427 aa).

The active-site Proton acceptor is the Asp99. Residues 99-103 (DSGGF), Asp153, Gln196, and Gly223 contribute to the substrate site. An RNA binding region spans residues 254–260 (GVGFAAD). Asp273 functions as the Nucleophile in the catalytic mechanism. The RNA binding; important for wobble base 34 recognition stretch occupies residues 278-282 (TRTAR). Residues Cys311, Cys313, Cys316, and His341 each coordinate Zn(2+). Positions 395-427 (PADPERIDEQDQKPKTEKRRETEDVAEEQVASS) are disordered. The span at 397–417 (DPERIDEQDQKPKTEKRRETE) shows a compositional bias: basic and acidic residues.

It belongs to the queuine tRNA-ribosyltransferase family. Heterodimer of a catalytic subunit and an accessory subunit. The cofactor is Zn(2+).

The protein resides in the cytoplasm. It carries out the reaction guanosine(34) in tRNA + queuine = queuosine(34) in tRNA + guanine. In terms of biological role, catalytic subunit of the queuine tRNA-ribosyltransferase (TGT) that catalyzes the base-exchange of a guanine (G) residue with queuine (Q) at position 34 (anticodon wobble position) in tRNAs with GU(N) anticodons (tRNA-Asp, -Asn, -His and -Tyr), resulting in the hypermodified nucleoside queuosine (7-(((4,5-cis-dihydroxy-2-cyclopenten-1-yl)amino)methyl)-7-deazaguanosine). Catalysis occurs through a double-displacement mechanism. The nucleophile active site attacks the C1' of nucleotide 34 to detach the guanine base from the RNA, forming a covalent enzyme-RNA intermediate. The proton acceptor active site deprotonates the incoming queuine, allowing a nucleophilic attack on the C1' of the ribose to form the product. This chain is Queuine tRNA-ribosyltransferase catalytic subunit (Tgt), found in Drosophila melanogaster (Fruit fly).